Here is a 340-residue protein sequence, read N- to C-terminus: MAVTVYYDKDCDLSLIRSKKVAMIGFGSQGHAHALNLRDSGVDVVVGLKKGGKSWAKAEAMNFKVKSVVEATKEADVIMILTPDELQADIFASEIKDNLKEGDTIAFGHGFNIHYGQIVPPKGVDCIMVAPKAPGHTVRSEFVKGGGVPNLIAVSQNASGQAKELALSYASAIGAGRTGIIETTFKDETETDLFGEQAVLCGGLCALINAGFNTLTEAGYEPEMAYFECLHEMKLIVDLIYQGGMSDMRYSISNTAEYGDYISGKKVINEDSKKAMKEILGSIQDGSFAKDFILERKAGYARMNAERKIADASLLNKTGEKLRAMMPWIKNGKLVDKDKN.

A KARI N-terminal Rossmann domain is found at 1–183; the sequence is MAVTVYYDKD…GAGRTGIIET (183 aa). NADP(+) is bound by residues 26–29, Lys49, Ser54, and 84–87; these read FGSQ and DELQ. His109 is an active-site residue. Gly135 contacts NADP(+). The region spanning 184–329 is the KARI C-terminal knotted domain; sequence TFKDETETDL…EKLRAMMPWI (146 aa). Positions 192, 196, 228, and 232 each coordinate Mg(2+). Ser253 contributes to the substrate binding site.

Belongs to the ketol-acid reductoisomerase family. Requires Mg(2+) as cofactor.

The enzyme catalyses (2R)-2,3-dihydroxy-3-methylbutanoate + NADP(+) = (2S)-2-acetolactate + NADPH + H(+). The catalysed reaction is (2R,3R)-2,3-dihydroxy-3-methylpentanoate + NADP(+) = (S)-2-ethyl-2-hydroxy-3-oxobutanoate + NADPH + H(+). It functions in the pathway amino-acid biosynthesis; L-isoleucine biosynthesis; L-isoleucine from 2-oxobutanoate: step 2/4. It participates in amino-acid biosynthesis; L-valine biosynthesis; L-valine from pyruvate: step 2/4. Its function is as follows. Involved in the biosynthesis of branched-chain amino acids (BCAA). Catalyzes an alkyl-migration followed by a ketol-acid reduction of (S)-2-acetolactate (S2AL) to yield (R)-2,3-dihydroxy-isovalerate. In the isomerase reaction, S2AL is rearranged via a Mg-dependent methyl migration to produce 3-hydroxy-3-methyl-2-ketobutyrate (HMKB). In the reductase reaction, this 2-ketoacid undergoes a metal-dependent reduction by NADPH to yield (R)-2,3-dihydroxy-isovalerate. The sequence is that of Ketol-acid reductoisomerase (NADP(+)) from Campylobacter hominis (strain ATCC BAA-381 / DSM 21671 / CCUG 45161 / LMG 19568 / NCTC 13146 / CH001A).